A 306-amino-acid polypeptide reads, in one-letter code: Ribosomal RNA small subunit methyltransferase H (306 aa).

S-adenosyl-L-methionine is bound by residues 33–35 (GGY), D51, F78, D96, and Q103.

Belongs to the methyltransferase superfamily. RsmH family.

The protein localises to the cytoplasm. It catalyses the reaction cytidine(1402) in 16S rRNA + S-adenosyl-L-methionine = N(4)-methylcytidine(1402) in 16S rRNA + S-adenosyl-L-homocysteine + H(+). Functionally, specifically methylates the N4 position of cytidine in position 1402 (C1402) of 16S rRNA. The sequence is that of Ribosomal RNA small subunit methyltransferase H from Rickettsia prowazekii (strain Madrid E).